The chain runs to 245 residues: 1-(5-phosphoribosyl)-5-[(5-phosphoribosylamino)methylideneamino] imidazole-4-carboxamide isomerase (245 aa).

Asp-7 (proton acceptor) is an active-site residue. Residue Asp-129 is the Proton donor of the active site.

It belongs to the HisA/HisF family.

Its subcellular location is the cytoplasm. It carries out the reaction 1-(5-phospho-beta-D-ribosyl)-5-[(5-phospho-beta-D-ribosylamino)methylideneamino]imidazole-4-carboxamide = 5-[(5-phospho-1-deoxy-D-ribulos-1-ylimino)methylamino]-1-(5-phospho-beta-D-ribosyl)imidazole-4-carboxamide. It participates in amino-acid biosynthesis; L-histidine biosynthesis; L-histidine from 5-phospho-alpha-D-ribose 1-diphosphate: step 4/9. This is 1-(5-phosphoribosyl)-5-[(5-phosphoribosylamino)methylideneamino] imidazole-4-carboxamide isomerase from Shigella boydii serotype 18 (strain CDC 3083-94 / BS512).